The sequence spans 128 residues: uncharacterized protein (128 aa).

This is an uncharacterized protein from Archaeoglobus fulgidus (strain ATCC 49558 / DSM 4304 / JCM 9628 / NBRC 100126 / VC-16).